Reading from the N-terminus, the 436-residue chain is Na(+)/H(+) antiporter NhaA 1 (436 aa).

Helical transmembrane passes span 35–55 (FGGG…NSPW), 80–100 (LATW…GLEL), 116–136 (ALPV…YVGV), 147–167 (GWAI…AVIG), 176–196 (AFLL…IAIF), 201–221 (FKLT…LLVQ), 226–246 (WWWA…ESGV), 283–303 (VSAG…SLRG), 313–333 (PIVV…IFGS), 354–374 (LLGV…IGEL), and 385–405 (VKAA…IVLI).

It belongs to the NhaA Na(+)/H(+) (TC 2.A.33) antiporter family.

Its subcellular location is the cell membrane. It carries out the reaction Na(+)(in) + 2 H(+)(out) = Na(+)(out) + 2 H(+)(in). Its function is as follows. Na(+)/H(+) antiporter that extrudes sodium in exchange for external protons. The protein is Na(+)/H(+) antiporter NhaA 1 of Salinispora tropica (strain ATCC BAA-916 / DSM 44818 / JCM 13857 / NBRC 105044 / CNB-440).